Consider the following 261-residue polypeptide: 7beta-hydroxysteroid dehydrogenase (261 aa).

NADP(+) is bound by residues 17–21 (TEGIG), 40–41 (RR), and 66–67 (DL). Tyr-156 acts as the Proton acceptor in catalysis.

It belongs to the short-chain dehydrogenases/reductases (SDR) family. Homodimer.

It carries out the reaction a 7beta-hydroxysteroid + NADP(+) = a 7-oxosteroid + NADPH + H(+). It catalyses the reaction ursocholate + NADP(+) = 3alpha,12alpha-dihydroxy-7-oxo-5beta-cholanate + NADPH + H(+). The enzyme catalyses 7-oxolithocholate + NADPH + H(+) = ursodeoxycholate + NADP(+). The catalysed reaction is 3alpha,7beta-dihydroxy-12-oxo-5beta-cholan-24-oate + NADP(+) = 7,12-dioxo-lithocholate + NADPH + H(+). It carries out the reaction 7beta-hydroxy-3,12-dioxo-5beta-cholan-24-oate + NADP(+) = dehydrocholate + NADPH + H(+). Functionally, 7beta-hydroxysteroid dehydrogenase that catalyzes the reduction of the 7-oxo group of 7-oxosteroids, such as 3alpha,12alpha-dihydroxy-7-oxo-5beta-cholanate, 7-oxolithocholate, 7,12-dioxo-lithocholate and dehydrocholate, to the corresponding 7beta-hydroxysteroids. Is also able to catalyze the reverse oxidation reactions. Together with 7alpha-HSDH encoded in the adjacent gene, is likely involved in the epimerization of the hydroxy group at C-7 of primary bile acids through 7-keto bile acid intermediates. The protein is 7beta-hydroxysteroid dehydrogenase of Clostridium sardiniense (Clostridium absonum).